Consider the following 133-residue polypeptide: Large ribosomal subunit protein uL14m (133 aa).

It belongs to the universal ribosomal protein uL14 family. As to quaternary structure, probably part of the large ribosomal subunit.

It localises to the hydrogenosome. This is Large ribosomal subunit protein uL14m (rpl14) from Nyctotherus ovalis.